We begin with the raw amino-acid sequence, 367 residues long: Glutamate 5-kinase (367 aa).

K10 contributes to the ATP binding site. Residues S50, D137, and N149 each contribute to the substrate site. ATP is bound by residues T169–D170 and T211–K217. Residues A275–E353 form the PUA domain.

Belongs to the glutamate 5-kinase family.

The protein resides in the cytoplasm. The enzyme catalyses L-glutamate + ATP = L-glutamyl 5-phosphate + ADP. Its pathway is amino-acid biosynthesis; L-proline biosynthesis; L-glutamate 5-semialdehyde from L-glutamate: step 1/2. Functionally, catalyzes the transfer of a phosphate group to glutamate to form L-glutamate 5-phosphate. The protein is Glutamate 5-kinase of Erwinia tasmaniensis (strain DSM 17950 / CFBP 7177 / CIP 109463 / NCPPB 4357 / Et1/99).